The sequence spans 555 residues: CTP synthase (555 aa).

The tract at residues 1–272 (MQPTSTTTKH…DAYVVRKLDL (272 aa)) is amidoligase domain. Ser-19 serves as a coordination point for CTP. Ser-19 contacts UTP. Residues 20–25 (SLGKGL) and Asp-77 each bind ATP. Mg(2+) is bound by residues Asp-77 and Glu-146. CTP-binding positions include 153–155 (DIE), 193–198 (KTKPTQ), and Lys-229. Residues 193-198 (KTKPTQ) and Lys-229 contribute to the UTP site. A Glutamine amidotransferase type-1 domain is found at 297-548 (TVALVGKYID…VKAAVARQVA (252 aa)). Gly-360 contacts L-glutamine. Cys-387 acts as the Nucleophile; for glutamine hydrolysis in catalysis. L-glutamine contacts are provided by residues 388–391 (LGLQ), Glu-411, and Arg-473. Catalysis depends on residues His-521 and Glu-523.

Belongs to the CTP synthase family. In terms of assembly, homotetramer.

The enzyme catalyses UTP + L-glutamine + ATP + H2O = CTP + L-glutamate + ADP + phosphate + 2 H(+). It catalyses the reaction L-glutamine + H2O = L-glutamate + NH4(+). It carries out the reaction UTP + NH4(+) + ATP = CTP + ADP + phosphate + 2 H(+). The protein operates within pyrimidine metabolism; CTP biosynthesis via de novo pathway; CTP from UDP: step 2/2. Allosterically activated by GTP, when glutamine is the substrate; GTP has no effect on the reaction when ammonia is the substrate. The allosteric effector GTP functions by stabilizing the protein conformation that binds the tetrahedral intermediate(s) formed during glutamine hydrolysis. Inhibited by the product CTP, via allosteric rather than competitive inhibition. Catalyzes the ATP-dependent amination of UTP to CTP with either L-glutamine or ammonia as the source of nitrogen. Regulates intracellular CTP levels through interactions with the four ribonucleotide triphosphates. In Streptomyces griseus subsp. griseus (strain JCM 4626 / CBS 651.72 / NBRC 13350 / KCC S-0626 / ISP 5235), this protein is CTP synthase.